The sequence spans 190 residues: 2-phospho-L-lactate guanylyltransferase (190 aa).

The protein belongs to the CofC family. As to quaternary structure, homodimer.

It carries out the reaction (2S)-2-phospholactate + GTP + H(+) = (2S)-lactyl-2-diphospho-5'-guanosine + diphosphate. It functions in the pathway cofactor biosynthesis; coenzyme F420 biosynthesis. Functionally, guanylyltransferase that catalyzes the activation of (2S)-2-phospholactate (2-PL) as (2S)-lactyl-2-diphospho-5'-guanosine, via the condensation of 2-PL with GTP. It is involved in the biosynthesis of coenzyme F420, a hydride carrier cofactor. This chain is 2-phospho-L-lactate guanylyltransferase, found in Methanopyrus kandleri (strain AV19 / DSM 6324 / JCM 9639 / NBRC 100938).